A 108-amino-acid chain; its full sequence is Pyrimidine/purine nucleoside phosphorylase (108 aa).

The protein belongs to the nucleoside phosphorylase PpnP family.

The enzyme catalyses a purine D-ribonucleoside + phosphate = a purine nucleobase + alpha-D-ribose 1-phosphate. The catalysed reaction is adenosine + phosphate = alpha-D-ribose 1-phosphate + adenine. It catalyses the reaction cytidine + phosphate = cytosine + alpha-D-ribose 1-phosphate. It carries out the reaction guanosine + phosphate = alpha-D-ribose 1-phosphate + guanine. The enzyme catalyses inosine + phosphate = alpha-D-ribose 1-phosphate + hypoxanthine. The catalysed reaction is thymidine + phosphate = 2-deoxy-alpha-D-ribose 1-phosphate + thymine. It catalyses the reaction uridine + phosphate = alpha-D-ribose 1-phosphate + uracil. It carries out the reaction xanthosine + phosphate = alpha-D-ribose 1-phosphate + xanthine. In terms of biological role, catalyzes the phosphorolysis of diverse nucleosides, yielding D-ribose 1-phosphate and the respective free bases. Can use uridine, adenosine, guanosine, cytidine, thymidine, inosine and xanthosine as substrates. Also catalyzes the reverse reactions. The sequence is that of Pyrimidine/purine nucleoside phosphorylase from Acinetobacter baylyi (strain ATCC 33305 / BD413 / ADP1).